Here is a 361-residue protein sequence, read N- to C-terminus: Cyclin-dependent kinase 10 (361 aa).

The 285-residue stretch at 37 to 321 folds into the Protein kinase domain; it reads FEKLNRIGEG…AGDCLESSYF (285 aa). Residues 43–51 and Lys-66 each bind ATP; that span reads IGEGTYGIV. The Proton acceptor role is filled by Asp-161. The residue at position 194 (Thr-194) is a Phosphothreonine. The segment at 332–361 is disordered; that stretch reads LMPTFPHHRNKRATPATSLGTESQSRRGRP.

Belongs to the protein kinase superfamily. CMGC Ser/Thr protein kinase family. CDC2/CDKX subfamily. Heterodimer with CCNQ, the interaction is required for kinase activity. Interacts with ETS2. Interacts with PRK2.

The protein localises to the cytoplasm. The protein resides in the cytoskeleton. It localises to the cilium basal body. The enzyme catalyses L-seryl-[protein] + ATP = O-phospho-L-seryl-[protein] + ADP + H(+). It catalyses the reaction L-threonyl-[protein] + ATP = O-phospho-L-threonyl-[protein] + ADP + H(+). In terms of biological role, cyclin-dependent kinase that phosphorylates the transcription factor ETS2 (in vitro) and positively controls its proteasomal degradation (in cells). Involved in the regulation of actin cytoskeleton organization through the phosphorylation of actin dynamics regulators such as PKN2. Is a negative regulator of ciliogenesis through phosphorylation of PKN2 and promotion of RhoA signaling. This is Cyclin-dependent kinase 10 (CDK10) from Bos taurus (Bovine).